A 329-amino-acid chain; its full sequence is tRNA N6-adenosine threonylcarbamoyltransferase (329 aa).

2 residues coordinate Fe cation: His-110 and His-114. Substrate is bound by residues 132 to 136 (VISGG), Asp-165, Gly-178, and Asn-271. Asp-299 contributes to the Fe cation binding site.

It belongs to the KAE1 / TsaD family. Fe(2+) is required as a cofactor.

Its subcellular location is the cytoplasm. It catalyses the reaction L-threonylcarbamoyladenylate + adenosine(37) in tRNA = N(6)-L-threonylcarbamoyladenosine(37) in tRNA + AMP + H(+). Its function is as follows. Required for the formation of a threonylcarbamoyl group on adenosine at position 37 (t(6)A37) in tRNAs that read codons beginning with adenine. Is involved in the transfer of the threonylcarbamoyl moiety of threonylcarbamoyl-AMP (TC-AMP) to the N6 group of A37, together with TsaE and TsaB. TsaD likely plays a direct catalytic role in this reaction. The protein is tRNA N6-adenosine threonylcarbamoyltransferase of Neorickettsia sennetsu (strain ATCC VR-367 / Miyayama) (Ehrlichia sennetsu).